A 394-amino-acid chain; its full sequence is 8-amino-7-oxononanoate synthase (394 aa).

Substrate is bound at residue Arg22. 113–114 (GY) contacts pyridoxal 5'-phosphate. Residue His138 participates in substrate binding. Residues Ser184, His212, and Thr240 each contribute to the pyridoxal 5'-phosphate site. Residue Lys243 is modified to N6-(pyridoxal phosphate)lysine. A substrate-binding site is contributed by Thr359.

This sequence belongs to the class-II pyridoxal-phosphate-dependent aminotransferase family. BioF subfamily. Homodimer. It depends on pyridoxal 5'-phosphate as a cofactor.

The enzyme catalyses 6-carboxyhexanoyl-[ACP] + L-alanine + H(+) = (8S)-8-amino-7-oxononanoate + holo-[ACP] + CO2. It functions in the pathway cofactor biosynthesis; biotin biosynthesis. Its function is as follows. Catalyzes the decarboxylative condensation of pimeloyl-[acyl-carrier protein] and L-alanine to produce 8-amino-7-oxononanoate (AON), [acyl-carrier protein], and carbon dioxide. This chain is 8-amino-7-oxononanoate synthase, found in Janthinobacterium sp. (strain Marseille) (Minibacterium massiliensis).